Reading from the N-terminus, the 299-residue chain is Phosphoribosylaminoimidazole-succinocarboxamide synthase (299 aa).

This sequence belongs to the SAICAR synthetase family.

It carries out the reaction 5-amino-1-(5-phospho-D-ribosyl)imidazole-4-carboxylate + L-aspartate + ATP = (2S)-2-[5-amino-1-(5-phospho-beta-D-ribosyl)imidazole-4-carboxamido]succinate + ADP + phosphate + 2 H(+). It functions in the pathway purine metabolism; IMP biosynthesis via de novo pathway; 5-amino-1-(5-phospho-D-ribosyl)imidazole-4-carboxamide from 5-amino-1-(5-phospho-D-ribosyl)imidazole-4-carboxylate: step 1/2. This is Phosphoribosylaminoimidazole-succinocarboxamide synthase from Streptomyces coelicolor (strain ATCC BAA-471 / A3(2) / M145).